A 523-amino-acid chain; its full sequence is Leucine-rich repeat transmembrane neuronal protein 1 (523 aa).

Residues 1–34 (MDFLLLGLCLHWLLRRPSGVVLCLLGACFQMLPA) form the signal peptide. An LRRNT domain is found at 35–63 (APSGCPGQCRCEGRLLYCEALNLTEAPHN). Residues 35-428 (APSGCPGQCR…HAENAVQIHK (394 aa)) are Extracellular-facing. 2 N-linked (GlcNAc...) asparagine glycosylation sites follow: asparagine 56 and asparagine 63. 10 LRR repeats span residues 64–87 (LSGL…QFTG), 89–111 (MQLT…AFQK), 112–135 (LRRV…TFRP), 136–159 (MPNL…LFHG), 161–183 (RKLT…IFQD), 184–207 (CRSL…SFAG), 209–231 (FKLT…HFPR), 233–255 (ISLN…LDWV), 256–278 (WNLE…VFET), and 280–302 (PYLQ…ILNS). Asparagine 130 is a glycosylation site (N-linked (GlcNAc...) asparagine). Residues 314 to 365 (NLWDCGRNVCALASWLSNFQGRYDANLQCASPEYAQGEDVLDAVYAFHLCED) enclose the LRRCT domain. Asparagine 381 carries an N-linked (GlcNAc...) asparagine glycan. A helical membrane pass occupies residues 429-449 (VVTGTMALIFSFLIVVLVLYV). Topologically, residues 450-523 (SWKCFPASLR…HQQPARECEV (74 aa)) are cytoplasmic. A May be involved in DLG4-binding motif is present at residues 520–523 (ECEV).

The protein belongs to the LRRTM family. Interacts with DLG4.

The protein resides in the cell membrane. It localises to the postsynaptic cell membrane. Its function is as follows. Exhibits strong synaptogenic activity, restricted to excitatory presynaptic differentiation, acting at both pre- and postsynaptic level. The protein is Leucine-rich repeat transmembrane neuronal protein 1 (Lrrtm1) of Rattus norvegicus (Rat).